Consider the following 318-residue polypeptide: Ribosomal RNA small subunit methyltransferase H (318 aa).

S-adenosyl-L-methionine-binding positions include glycine 33–histidine 35, aspartate 53, phenylalanine 80, aspartate 101, and glutamine 108.

Belongs to the methyltransferase superfamily. RsmH family.

Its subcellular location is the cytoplasm. It carries out the reaction cytidine(1402) in 16S rRNA + S-adenosyl-L-methionine = N(4)-methylcytidine(1402) in 16S rRNA + S-adenosyl-L-homocysteine + H(+). Its function is as follows. Specifically methylates the N4 position of cytidine in position 1402 (C1402) of 16S rRNA. The polypeptide is Ribosomal RNA small subunit methyltransferase H (Symbiobacterium thermophilum (strain DSM 24528 / JCM 14929 / IAM 14863 / T)).